The sequence spans 428 residues: Adenylosuccinate synthetase (428 aa).

Residues 12–18 and 40–42 each bind GTP; these read GDEGKGK and GHT. D13 serves as the catalytic Proton acceptor. Mg(2+)-binding residues include D13 and G40. IMP is bound by residues 13-16, 38-41, T128, R142, Q223, T238, and R302; these read DEGK and NAGH. Residue H41 is the Proton donor of the active site. Residue 298–304 coordinates substrate; it reads TTTGRPR. Residues R304, 330–332, and 412–414 each bind GTP; these read SID and SVG.

This sequence belongs to the adenylosuccinate synthetase family. Homodimer. Mg(2+) is required as a cofactor.

The protein resides in the cytoplasm. The catalysed reaction is IMP + L-aspartate + GTP = N(6)-(1,2-dicarboxyethyl)-AMP + GDP + phosphate + 2 H(+). Its pathway is purine metabolism; AMP biosynthesis via de novo pathway; AMP from IMP: step 1/2. Plays an important role in the de novo pathway of purine nucleotide biosynthesis. Catalyzes the first committed step in the biosynthesis of AMP from IMP. The chain is Adenylosuccinate synthetase from Shouchella clausii (strain KSM-K16) (Alkalihalobacillus clausii).